The following is a 218-amino-acid chain: Eukaryotic translation initiation factor 3 subunit K (218 aa).

N-acetylalanine is present on Ala-2. Residue Thr-28 is modified to Phosphothreonine. A PCI domain is found at 42–204 (YDLEANLAVL…SIKPKNIVEK (163 aa)). Ser-217 carries the phosphoserine modification.

Component of the eukaryotic translation initiation factor 3 (eIF-3) complex, which is composed of 13 subunits: EIF3A, EIF3B, EIF3C, EIF3D, EIF3E, EIF3F, EIF3G, EIF3H, EIF3I, EIF3J, EIF3K, EIF3L and EIF3M. The eIF-3 complex appears to include 3 stable modules: module A is composed of EIF3A, EIF3B, EIF3G and EIF3I; module B is composed of EIF3F, EIF3H, and EIF3M; and module C is composed of EIF3C, EIF3D, EIF3E, EIF3K and EIF3L. EIF3C of module C binds EIF3B of module A and EIF3H of module B, thereby linking the three modules. EIF3J is a labile subunit that binds to the eIF-3 complex via EIF3B. The eIF-3 complex interacts with RPS6KB1 under conditions of nutrient depletion. Mitogenic stimulation leads to binding and activation of a complex composed of MTOR and RPTOR, leading to phosphorylation and release of RPS6KB1 and binding of EIF4B to eIF-3. Interacts with CCND3, but not with CCND1 and CCND2. As to expression, ubiquitous, with the highest levels of expression in brain, testis and kidney.

Its subcellular location is the nucleus. The protein resides in the cytoplasm. In terms of biological role, component of the eukaryotic translation initiation factor 3 (eIF-3) complex, which is required for several steps in the initiation of protein synthesis. The eIF-3 complex associates with the 40S ribosome and facilitates the recruitment of eIF-1, eIF-1A, eIF-2:GTP:methionyl-tRNAi and eIF-5 to form the 43S pre-initiation complex (43S PIC). The eIF-3 complex stimulates mRNA recruitment to the 43S PIC and scanning of the mRNA for AUG recognition. The eIF-3 complex is also required for disassembly and recycling of post-termination ribosomal complexes and subsequently prevents premature joining of the 40S and 60S ribosomal subunits prior to initiation. The eIF-3 complex specifically targets and initiates translation of a subset of mRNAs involved in cell proliferation, including cell cycling, differentiation and apoptosis, and uses different modes of RNA stem-loop binding to exert either translational activation or repression. In Homo sapiens (Human), this protein is Eukaryotic translation initiation factor 3 subunit K.